The primary structure comprises 510 residues: Hyaluronidase PH-20 (510 aa).

Residues 1–35 form the signal peptide; the sequence is MGVLKFKHIFFRSFVKSSGVSQIVFTFLLIPCCLT. Intrachain disulfides connect C60–C351 and C224–C238. N82 carries an N-linked (GlcNAc...) asparagine glycan. E148 functions as the Proton donor in the catalytic mechanism. N-linked (GlcNAc...) asparagine glycosylation is found at N166, N235, N254, and N368. 3 disulfide bridges follow: C376-C387, C381-C435, and C437-C464. 3 N-linked (GlcNAc...) asparagine glycosylation sites follow: N393, N440, and N484. S491 is lipidated: GPI-anchor amidated serine. Positions 492–510 are cleaved as a propeptide — removed in mature form; it reads TTMFIVNILFLIISSVASL.

This sequence belongs to the glycosyl hydrolase 56 family. As to expression, testis.

It localises to the cell membrane. The catalysed reaction is Random hydrolysis of (1-&gt;4)-linkages between N-acetyl-beta-D-glucosamine and D-glucuronate residues in hyaluronate.. Involved in sperm-egg adhesion. Upon fertilization sperm must first penetrate a layer of cumulus cells that surrounds the egg before reaching the zona pellucida. The cumulus cells are embedded in a matrix containing hyaluronic acid which is formed prior to ovulation. This protein aids in penetrating the layer of cumulus cells by digesting hyaluronic acid. The protein is Hyaluronidase PH-20 (SPAM1) of Macaca fascicularis (Crab-eating macaque).